Consider the following 151-residue polypeptide: UPF0179 protein MJ1627 (151 aa).

It belongs to the UPF0179 family.

This is UPF0179 protein MJ1627 from Methanocaldococcus jannaschii (strain ATCC 43067 / DSM 2661 / JAL-1 / JCM 10045 / NBRC 100440) (Methanococcus jannaschii).